We begin with the raw amino-acid sequence, 661 residues long: MSRELIILCQPILVLFLTLFYNSHGYFVSQGSVGIGFNGYFTLTNTTKHTFGQAFENEHVEIKNSSTGVISSFSVNFFFAIVPEHNQQGSHGMTFVISPTRGLPGASSDQYLGIFNKTNNGKASNNVIAIELDIHKDEEFGDIDDNHVGININGLRSVASASAGYYDDKDGSFKKLSLISREVMRLSIVYSQPDQQLNVTLFPAEIPVPPLKPLLSLNRDLSPYLLEKMYLGFTASTGSVGAIHYLMGWLVNGVIEYPRLELSIPVLPPYPKKTSNRTKTVLAVCLTVSVFAAFVASWIGFVFYLRHKKVKEVLEEWEIQYGPHRFAYKELFNATKGFKEKQLLGKGGFGQVYKGTLPGSDAEIAVKRTSHDSRQGMSEFLAEISTIGRLRHPNLVRLLGYCRHKENLYLVYDYMPNGSLDKYLNRSENQERLTWEQRFRIIKDVATALLHLHQEWVQVIIHRDIKPANVLIDNEMNARLGDFGLAKLYDQGFDPETSKVAGTFGYIAPEFLRTGRATTSTDVYAFGLVMLEVVCGRRIIERRAAENEEYLVDWILELWENGKIFDAAEESIRQEQNRGQVELVLKLGVLCSHQAASIRPAMSVVMRILNGVSQLPDNLLDVVRAEKFREWPETSMELLLLDVNTSSSLELTDSSFVSHGR.

Positions 1 to 25 (MSRELIILCQPILVLFLTLFYNSHG) are cleaved as a signal peptide. Residues 26–282 (YFVSQGSVGI…KTSNRTKTVL (257 aa)) are Extracellular-facing. The tract at residues 30–250 (QGSVGIGFNG…GAIHYLMGWL (221 aa)) is legume-lectin like. N-linked (GlcNAc...) asparagine glycans are attached at residues Asn-45, Asn-64, Asn-116, Asn-198, and Asn-276. The helical transmembrane segment at 283–303 (AVCLTVSVFAAFVASWIGFVF) threads the bilayer. The Cytoplasmic portion of the chain corresponds to 304–661 (YLRHKKVKEV…TDSSFVSHGR (358 aa)). The 259-residue stretch at 338 to 596 (FKEKQLLGKG…LGVLCSHQAA (259 aa)) folds into the Protein kinase domain. Residues 344–352 (LGKGGFGQV) and Lys-367 each bind ATP. The Proton acceptor role is filled by Asp-464.

In the C-terminal section; belongs to the protein kinase superfamily. Ser/Thr protein kinase family. This sequence in the N-terminal section; belongs to the leguminous lectin family. Autophosphorylated on a Ser residue. In terms of tissue distribution, expressed at low levels in stems, leaves, flowers and siliques.

It is found in the cell membrane. It catalyses the reaction L-seryl-[protein] + ATP = O-phospho-L-seryl-[protein] + ADP + H(+). The catalysed reaction is L-threonyl-[protein] + ATP = O-phospho-L-threonyl-[protein] + ADP + H(+). Functionally, confers resistance to the pathogenic oomycetes Phytophthora infestans and Phytophthora capsici, but confers susceptibility to the pathogenic bacteria Pseudomonas syringae. The sequence is that of L-type lectin-domain containing receptor kinase V.5 from Arabidopsis thaliana (Mouse-ear cress).